Here is a 131-residue protein sequence, read N- to C-terminus: NADPH-dependent 7-cyano-7-deazaguanine reductase (131 aa).

Catalysis depends on cysteine 41, which acts as the Thioimide intermediate. The active-site Proton donor is the aspartate 48. Substrate-binding positions include 63 to 65 and 82 to 83; these read VEL and HE.

It belongs to the GTP cyclohydrolase I family. QueF type 1 subfamily.

The protein resides in the cytoplasm. The catalysed reaction is 7-aminomethyl-7-carbaguanine + 2 NADP(+) = 7-cyano-7-deazaguanine + 2 NADPH + 3 H(+). The protein operates within tRNA modification; tRNA-queuosine biosynthesis. In terms of biological role, catalyzes the NADPH-dependent reduction of 7-cyano-7-deazaguanine (preQ0) to 7-aminomethyl-7-deazaguanine (preQ1). This is NADPH-dependent 7-cyano-7-deazaguanine reductase from Nitratiruptor sp. (strain SB155-2).